A 240-amino-acid polypeptide reads, in one-letter code: Putative tyrosine phosphatase 067L (240 aa).

The Tyrosine-protein phosphatase domain occupies 3-151 (QASFFVADKA…EREWPLNPTQ (149 aa)). Catalysis depends on Cys96, which acts as the Phosphocysteine intermediate.

It belongs to the protein-tyrosine phosphatase family.

The enzyme catalyses O-phospho-L-tyrosyl-[protein] + H2O = L-tyrosyl-[protein] + phosphate. The polypeptide is Putative tyrosine phosphatase 067L (Aedes vexans (Inland floodwater mosquito)).